Consider the following 88-residue polypeptide: Small ribosomal subunit protein uS17 (88 aa).

This sequence belongs to the universal ribosomal protein uS17 family. In terms of assembly, part of the 30S ribosomal subunit.

Its function is as follows. One of the primary rRNA binding proteins, it binds specifically to the 5'-end of 16S ribosomal RNA. The polypeptide is Small ribosomal subunit protein uS17 (Nitrosospira multiformis (strain ATCC 25196 / NCIMB 11849 / C 71)).